Consider the following 201-residue polypeptide: NADH-quinone oxidoreductase subunit B 1 (201 aa).

Positions 80, 81, 145, and 175 each coordinate [4Fe-4S] cluster.

The protein belongs to the complex I 20 kDa subunit family. In terms of assembly, NDH-1 is composed of 14 different subunits. Subunits NuoB, C, D, E, F, and G constitute the peripheral sector of the complex. Requires [4Fe-4S] cluster as cofactor.

It localises to the cell inner membrane. It carries out the reaction a quinone + NADH + 5 H(+)(in) = a quinol + NAD(+) + 4 H(+)(out). Functionally, NDH-1 shuttles electrons from NADH, via FMN and iron-sulfur (Fe-S) centers, to quinones in the respiratory chain. The immediate electron acceptor for the enzyme in this species is believed to be ubiquinone. Couples the redox reaction to proton translocation (for every two electrons transferred, four hydrogen ions are translocated across the cytoplasmic membrane), and thus conserves the redox energy in a proton gradient. The sequence is that of NADH-quinone oxidoreductase subunit B 1 from Rhodopseudomonas palustris (strain BisB18).